A 430-amino-acid chain; its full sequence is Ribosomal protein uS12 methylthiotransferase RimO (430 aa).

The MTTase N-terminal domain maps to 2-118; it reads AKIFTISLGC…IDNVIKRPKH (117 aa). [4Fe-4S] cluster contacts are provided by Cys-11, Cys-47, Cys-81, Cys-150, Cys-154, and Cys-157. A Radical SAM core domain is found at 136 to 368; sequence LTAPHSAYLK…AQSRVIDSIN (233 aa). Residues 369–430 form the TRAM domain; that stretch reads RKLKGKTVKV…KGYNRTGKII (62 aa).

It belongs to the methylthiotransferase family. RimO subfamily. [4Fe-4S] cluster serves as cofactor.

The protein localises to the cytoplasm. The enzyme catalyses L-aspartate(89)-[ribosomal protein uS12]-hydrogen + (sulfur carrier)-SH + AH2 + 2 S-adenosyl-L-methionine = 3-methylsulfanyl-L-aspartate(89)-[ribosomal protein uS12]-hydrogen + (sulfur carrier)-H + 5'-deoxyadenosine + L-methionine + A + S-adenosyl-L-homocysteine + 2 H(+). Its function is as follows. Catalyzes the methylthiolation of an aspartic acid residue of ribosomal protein uS12. The polypeptide is Ribosomal protein uS12 methylthiotransferase RimO (Elusimicrobium minutum (strain Pei191)).